The following is a 142-amino-acid chain: Large ribosomal subunit protein uL13 (142 aa).

The protein belongs to the universal ribosomal protein uL13 family. In terms of assembly, part of the 50S ribosomal subunit.

Functionally, this protein is one of the early assembly proteins of the 50S ribosomal subunit, although it is not seen to bind rRNA by itself. It is important during the early stages of 50S assembly. In Haemophilus influenzae (strain 86-028NP), this protein is Large ribosomal subunit protein uL13.